The following is a 265-amino-acid chain: MNLQDIAKIREVNPVVVNYANFVTPFLVANGLNAVGASPIMSDEVSEAEELVQLASAVVINAGASRKESWPLMNKLCEAANQYQKPLVLDPVAVGATQYRKALNLMLLEKYHFDVIRGNIGEIAVLAGIDWQTRGIDAGNGTGDMSAVVQACAQKFKNVVIASGEVDYISDGQQVITVHNNTKLLPAIVGSGDLLSSIVGAFSAVAENTLDAAVTASLVLSCAGERAAAQLDQQNRPGSFLSYLLDELANITPEQVQDLMKIGEA.

Residue Met-41 coordinates substrate. The ATP site is built by Arg-117 and Ser-163. Gly-190 contributes to the substrate binding site.

Belongs to the Thz kinase family. Mg(2+) serves as cofactor.

It catalyses the reaction 5-(2-hydroxyethyl)-4-methylthiazole + ATP = 4-methyl-5-(2-phosphooxyethyl)-thiazole + ADP + H(+). It functions in the pathway cofactor biosynthesis; thiamine diphosphate biosynthesis; 4-methyl-5-(2-phosphoethyl)-thiazole from 5-(2-hydroxyethyl)-4-methylthiazole: step 1/1. Its function is as follows. Catalyzes the phosphorylation of the hydroxyl group of 4-methyl-5-beta-hydroxyethylthiazole (THZ). This chain is Hydroxyethylthiazole kinase, found in Pediococcus pentosaceus (strain ATCC 25745 / CCUG 21536 / LMG 10740 / 183-1w).